The following is a 1075-amino-acid chain: Error-prone DNA polymerase (1075 aa).

The protein belongs to the DNA polymerase type-C family. DnaE2 subfamily.

Its subcellular location is the cytoplasm. It carries out the reaction DNA(n) + a 2'-deoxyribonucleoside 5'-triphosphate = DNA(n+1) + diphosphate. DNA polymerase involved in damage-induced mutagenesis and translesion synthesis (TLS). It is not the major replicative DNA polymerase. The protein is Error-prone DNA polymerase of Ralstonia nicotianae (strain ATCC BAA-1114 / GMI1000) (Ralstonia solanacearum).